Here is a 195-residue protein sequence, read N- to C-terminus: Transcriptional regulator LdrP (195 aa).

The 73-residue stretch at 110–182 (GELRARIARY…YRRVYLLDLA (73 aa)) folds into the HTH crp-type domain. Residues 142-161 (HEEIADATASIRESVSKVLA) constitute a DNA-binding region (H-T-H motif).

In terms of assembly, homodimer.

In terms of biological role, activates transcription. Positively regulates PcrtB promoter upstream of the crtB operon in a cAMP-independent manner. Regulated genes include genes encoding DNA photolyase, phytoene synthase and cytochrome P450 monooxygenase, which are involved in carotenoid biosynthesis. Positively regulates the light-inducible gene cluster in the megaplasmid in a cAMP-independent manner. The polypeptide is Transcriptional regulator LdrP (Thermus thermophilus (strain ATCC 27634 / DSM 579 / HB8)).